Here is a 486-residue protein sequence, read N- to C-terminus: Cysteine--tRNA ligase (486 aa).

Cysteine 29 lines the Zn(2+) pocket. The short motif at 31–41 (VTVYDYCHLGH) is the 'HIGH' region element. The Zn(2+) site is built by cysteine 214, histidine 239, and glutamate 243. The short motif at 271–275 (KMSKS) is the 'KMSKS' region element. An ATP-binding site is contributed by lysine 274.

Belongs to the class-I aminoacyl-tRNA synthetase family. As to quaternary structure, monomer. It depends on Zn(2+) as a cofactor.

It is found in the cytoplasm. It catalyses the reaction tRNA(Cys) + L-cysteine + ATP = L-cysteinyl-tRNA(Cys) + AMP + diphosphate. The chain is Cysteine--tRNA ligase from Trichormus variabilis (strain ATCC 29413 / PCC 7937) (Anabaena variabilis).